The chain runs to 471 residues: 3-isopropylmalate dehydratase large subunit (471 aa).

The [4Fe-4S] cluster site is built by Cys347, Cys407, and Cys410.

The protein belongs to the aconitase/IPM isomerase family. LeuC type 1 subfamily. In terms of assembly, heterodimer of LeuC and LeuD. [4Fe-4S] cluster is required as a cofactor.

It carries out the reaction (2R,3S)-3-isopropylmalate = (2S)-2-isopropylmalate. The protein operates within amino-acid biosynthesis; L-leucine biosynthesis; L-leucine from 3-methyl-2-oxobutanoate: step 2/4. Its function is as follows. Catalyzes the isomerization between 2-isopropylmalate and 3-isopropylmalate, via the formation of 2-isopropylmaleate. The protein is 3-isopropylmalate dehydratase large subunit of Geobacillus thermodenitrificans (strain NG80-2).